The chain runs to 232 residues: Alpha N-terminal protein methyltransferase 1 (232 aa).

Residues Gly71, Arg76, 123 to 124 (MQ), and Gln139 each bind S-adenosyl-L-methionine.

It belongs to the methyltransferase superfamily. NTM1 family.

It is found in the cytoplasm. The catalysed reaction is N-terminal L-alanyl-L-prolyl-L-lysyl-[protein] + 3 S-adenosyl-L-methionine = N-terminal N,N,N-trimethyl-L-alanyl-L-prolyl-L-lysyl-[protein] + 3 S-adenosyl-L-homocysteine + 3 H(+). It carries out the reaction N-terminal L-seryl-L-prolyl-L-lysyl-[protein] + 3 S-adenosyl-L-methionine = N-terminal N,N,N-trimethyl-L-seryl-L-prolyl-L-lysyl-[protein] + 3 S-adenosyl-L-homocysteine + 3 H(+). The enzyme catalyses N-terminal L-prolyl-L-prolyl-L-lysyl-[protein] + 2 S-adenosyl-L-methionine = N-terminal N,N-dimethyl-L-prolyl-L-prolyl-L-lysyl-[protein] + 2 S-adenosyl-L-homocysteine + 2 H(+). Alpha-N-methyltransferase that methylates the N-terminus of target proteins containing the N-terminal motif [Ala/Pro/Ser]-Pro-Lys when the initiator Met is cleaved. Specifically catalyzes mono-, di- or tri-methylation of exposed alpha-amino group of Ala or Ser residue in the [Ala/Ser]-Pro-Lys motif and mono- or di-methylation of Pro in the Pro-Pro-Lys motif. Responsible for the N-terminal methylation of the ribosomal proteins RPL12A, RPL12B, RPS25A and RPS25B. This chain is Alpha N-terminal protein methyltransferase 1 (TAE1), found in Saccharomyces cerevisiae (strain ATCC 204508 / S288c) (Baker's yeast).